The primary structure comprises 5376 residues: Zonadhesin (5376 aa).

An N-terminal signal peptide occupies residues 1–17; that stretch reads MALPVWTLMLLVGAAWG. Residues 18 to 5310 lie on the Extracellular side of the membrane; that stretch reads QEQVPAWRPN…TTRKKIEASS (5293 aa). MAM domains follow at residues 45–210, 215–374, and 377–542; these read SKCD…TCNQ, QMCT…PCGE, and PQCD…PCRV. Asn-339 and Asn-499 each carry an N-linked (GlcNAc...) asparagine glycan. Residues 547–1170 are 80 X heptapeptide repeats (approximate) (mucin-like domain); that stretch reads EIPSSPLLPP…PTTGVSTTES (624 aa). Disordered regions lie at residues 553-579 and 1037-1113; these read LLPP…TKAT and TVPP…TVST. The segment covering 1052–1113 has biased composition (low complexity); it reads TEVTTTPPEE…IASEETTVST (62 aa). The region spanning 1171–1220 is the TIL 1 domain; it reads CPPNAHIELCACPASCESPKPSCQPPCIPGCVCNPGFLFSNNQCINESSC. N-linked (GlcNAc...) asparagine glycosylation is found at Asn-1216, Asn-1239, and Asn-1314. The region spanning 1227–1275 is the VWFC 1 domain; sequence KHYKPGEEWFTPNCTERCRCLPGSLMECQISQCGTHTVCQLKSDQYQCE. Residues 1280 to 1462 form the VWFD 1 domain; that stretch reads ATCLVYGDLH…DKDWVSSRCQ (183 aa). 2 disulfide bridges follow: Cys-1282-Cys-1417 and Cys-1304-Cys-1461. The TIL 2 domain maps to 1555-1608; it reads CPKNSRYSLCAKPCPETCHPISTTQHCSDKCVEGCECDPGFILSGSECVPSSQC. The region spanning 1609–1664 is the VWFC 2 domain; the sequence is GCTSFQGRYFKLQEQWFNPDCKEICTCESHNHILCKPWKCKAQEACSYKNGVLGCH. A VWFD 2 domain is found at 1669-1849; that stretch reads ATCMVSGDPH…ILEASDPGCF (181 aa). 2 disulfide bridges follow: Cys-1671–Cys-1809 and Cys-1693–Cys-1848. 3 N-linked (GlcNAc...) asparagine glycosylation sites follow: Asn-1814, Asn-1908, and Asn-1933. Residues 1941 to 1995 enclose the TIL 3 domain; the sequence is CPPRSSYNPCANSCPATCLTLSTPRDCPTLPCVEGCECQSGHILSGTTCVPLRQC. The VWFC 3 domain maps to 1996–2052; sequence GCSDQDGSYHLLGESWYTEKTCTTLCTCSAHSNITCSPTACKANHVCLRQEGLLRCA. 4 N-linked (GlcNAc...) asparagine glycosylation sites follow: Asn-2028, Asn-2111, Asn-2142, and Asn-2332. The 184-residue stretch at 2056 to 2239 folds into the VWFD 3 domain; the sequence is GECRISEDSQ…KDKSMDPNCQ (184 aa). Disulfide bonds link Cys-2058–Cys-2200 and Cys-2080–Cys-2238. A TIL 4 domain is found at 2340-2398; sequence CPAHSHYTNCLPSCPPSCLDPDSRCEGSGHKVPATCREGCICQPDYVLLNDKCVLRSHC. A VWFC 4 domain is found at 2399-2454; it reads GCKDAQGVFIPAGKTWISEDCTQSCTCMKGSMRCWDFQCPPGTYCKNSNDGSSNCV. The TIL 5 domain occupies 2460-2518; sequence CPAHSKFTDCLPPCHPSCSDPDGHCEGISTNAHSNCKEGCVCQPGYVLRNDKCVLRIEC. The region spanning 2519 to 2574 is the VWFC 5 domain; that stretch reads GCQHTQGGFIPAGKNWTSRGCSQSCDCMEGVIRCQNFQCPSGTYCQDIEDGTSNCA. N-linked (GlcNAc...) asparagine glycosylation is found at Asn-2533 and Asn-2575. One can recognise a TIL 6 domain in the interval 2580–2638; sequence CPAHSSFTNCLPPCQPSCSDPEGHCGGSTTKAPSACQEGCVCEPDYVVLNNKCVPRIEC. The VWFC 6 domain maps to 2639-2694; that stretch reads GCKDAQGVLIPADKIWINKGCTQTCACVTGTIHCRDFQCPSGTYCKDIKDDASNCT. N-linked (GlcNAc...) asparagine glycosylation occurs at Asn-2692. The TIL 7 domain maps to 2700-2758; that stretch reads CPDHSLYTHCLPSCLLSCSDPDGLCRGTSPEAPSTCKEGCVCDPDYVLSNDKCVLRIEC. The VWFC 7 domain maps to 2759 to 2814; the sequence is GCKDAQGVLIPAGKTWINRGCTQSCSCMGGAIQCQNFKCPSEAYCQDMEDGNSNCT. Asn-2812 carries an N-linked (GlcNAc...) asparagine glycan. In terms of domain architecture, TIL 8 spans 2820–2878; that stretch reads CPAHSHYTNCLPTCQPSCSDPDGHCEGSSTKAPSACKEGCVCEPDYVMLNNKCVPRIEC. In terms of domain architecture, VWFC 8 spans 2879 to 2934; the sequence is GCKDTQGVLIPADKTWINRGCTQSCTCRGGAIQCQKYHCSSGTYCKDMEDDSSSCA. Residues 2940-2998 form the TIL 9 domain; that stretch reads CPAHSHFTNCLPPCQPSCLDSEGHCEGSTTKAPSACQEGCVCEPDYVVLNNKCVPRIEC. Residues 2999–3054 form the VWFC 9 domain; sequence GCKDAQGVLIPADKTWINRGCTQSCTCKGGAIQCQKFQCPSETYCKDIEDGNSNCT. Residues Asn-3052, Asn-3065, Asn-3144, and Asn-3172 are each glycosylated (N-linked (GlcNAc...) asparagine). The region spanning 3060–3118 is the TIL 10 domain; it reads CPANSNFTSCLPSCQPSCSNTDVHCEGSSPNTLSSCREGCVCQSGYVLHNDKCILRNQC. The region spanning 3119–3174 is the VWFC 10 domain; it reads GCKDAQGALIPEGKTWITSGCTQSCNCTGGAIQCQNFQCPLKTYCKDLKDGSSNCT. The TIL 11 domain maps to 3180 to 3238; that stretch reads CPAHSRYTNCLPSCPPLCLDPEGLCEGTSPKVPSTCREGCICQPGYLMHKNKCVLRIFC. A VWFC 11 domain is found at 3239 to 3294; sequence GCKNTQGAFISADKTWISRGCTQSCTCPAGAIHCRNFKCPSGTYCKNGDNGSSNCT. N-linked (GlcNAc...) asparagine glycans are attached at residues Asn-3288 and Asn-3292. Positions 3300–3355 constitute a TIL 12 domain; sequence CPTNSQFTDCLPSCVPSCSNRCEVTSPSVPSSCREGCLCNHGFVFSEDKCVPRTQC. In terms of domain architecture, VWFC 12 spans 3356-3411; that stretch reads GCKDARGAIIPAGKTWTSKGCTQSCACVEGNIQCQNFQCPPETYCKDNSEGSSTCT. A TIL 13 domain is found at 3417 to 3475; the sequence is CPAHTQYTSCLPSCLPSCLDPEGLCKDISPKVPSTCKEGCVCQSGYVLNSDKCVLRAEC. The 56-residue stretch at 3476–3531 folds into the VWFC 13 domain; the sequence is DCKDAQGALIPAGKTWTSPGCTQSCACMGGAVQCQSSQCPPGTYCKDNEDGNSNCA. The TIL 14 domain occupies 3537 to 3595; the sequence is CPAHSLFTNCLPPCLPSCLDPDGLCKGASPKVPSTCKEGCICQSGYVLSNNKCLLRNRC. Positions 3596-3651 constitute a VWFC 14 domain; the sequence is GCKDAHGALIPEDKTWVSRGCTQSCVCTGGSIQCLSSQCPPGAYCKDNEDGSSNCA. Residues 3657–3715 enclose the TIL 15 domain; sequence CPANSHYTDCFPPCPPSCSDPEGHCEASGPRVLSTCREGCLCNPGFVLDRDKCVPRVEC. The region spanning 3716–3771 is the VWFC 15 domain; the sequence is GCKDAQGALIPSGKTWTSPGCTQSCACMGGVVQCQSSQCPPGTYCKDNEDGNSNCA. Residues 3777-3835 form the TIL 16 domain; the sequence is CPTHSNYTDCLPFCLPSCLDPSALCGGTSPKGPSTCKEGCVCQPGYVLDKDKCILKIEC. Residue Asn-3782 is glycosylated (N-linked (GlcNAc...) asparagine). One can recognise a VWFC 16 domain in the interval 3836 to 3891; it reads GCRDTQGAVIPAGKTWLSTGCIQSCACVEGTIQCQNFQCPPGTYCNHNNNCAKIPL. Residues 3893-3951 enclose the TIL 17 domain; it reads CPAHSHFTSCLPSCPPSCANLDGSCEQTSPKVPSTCKEGCLCQPGYFLNNGKCVLQTHC. The region spanning 3952–4007 is the VWFC 17 domain; it reads DCKDAEGGLVPAGKTWTSKDCTQSCACTGGAVQCQNFQCPLGTYCKDSGDGSSNCT. An N-linked (GlcNAc...) asparagine glycan is attached at Asn-4005. Positions 4029 to 4087 constitute a TIL 18 domain; the sequence is CPAHSHFTSCLPSCPPSCSNLDGSCVESNFKAPSVCKKGCICQPGYLLNNDKCVLRIQC. The VWFC 18 domain occupies 4088-4143; that stretch reads GCKDTQGGLIPAGRTWISSDCTKSCSCMGGIIQCRDFQCPPGTYCKESNDSSRTCA. An N-linked (GlcNAc...) asparagine glycan is attached at Asn-4136. The region spanning 4149–4207 is the TIL 19 domain; that stretch reads CPAHSHYTNCLPACSRSCTDLDGHCEGTSPKVPSPCKEGCLCQPGYVVHNHKCVLQIHC. The 55-residue stretch at 4208 to 4262 folds into the VWFC 19 domain; that stretch reads GCKDAQGGFVPAGKTWISRGCTQSCACVGGAVQCHNFTCPTGTQCQNSSCSKITV. N-linked (GlcNAc...) asparagine glycans are attached at residues Asn-4243 and Asn-4254. The TIL 20 domain occupies 4264–4322; the sequence is CPAHSQYTTCLPSCLPSCFDPEGLCGGASPRAPSTCREGCVCEADYVLREDKCVLRTQC. One can recognise a VWFC 20 domain in the interval 4323 to 4378; the sequence is GCKDAQGDLIPANKTWLTRGCAQKCTCKGGNIHCWNFKCPLGTECKDSVDGGSNCT. N-linked (GlcNAc...) asparagine glycosylation is found at Asn-4335 and Asn-4376. Residues 4384–4442 enclose the TIL 21 domain; sequence CPAHSHHTYCLPSCIPSCSNVNDRCESTSLQRPSTCIEGCLCHSGFVFSKDKCVPRTQC. One can recognise a VWFC 21 domain in the interval 4443–4498; it reads GCKDSQGTLIPAGKNWITTGCSQRCTCTGGLVQCHDFQCPSGAECQDIEDGNSNCV. The 59-residue stretch at 4504-4562 folds into the TIL 22 domain; sequence CPAHSHYSKCLPPCQPSCSDPDGHCEGTSPEAPSTCEEGCVCEPDYVLSNDKCVPSSEC. The VWFC 22 domain occupies 4563 to 4618; the sequence is GCKDAHGVLIPESKTWVSRGCTKNCTCKGGTVQCHDFSCPTGSRCLDNNEGNSNCV. Residue Asn-4586 is glycosylated (N-linked (GlcNAc...) asparagine). In terms of domain architecture, TIL 23 spans 4624-4682; it reads CPAHSLYTNCLPSCLPSCSDPEGLCGGTSPEVPSTCKEGCICQSGYVLHKNKCMLRIHC. The VWFC 23 domain occupies 4683-4738; it reads DCKDFQGSLIKTGQTWISSGCSKICTCKGGFFQCQSYKCPSGTQCEESEDGSSNCV. Positions 4744 to 4802 constitute a TIL 24 domain; the sequence is CPANSLYTHCLPTCLPSCSNPDGRCEGTSHKAPSTCREGCVCQPGYLLNKDTCVHKNQC. The VWFC 24 domain occupies 4803–4858; that stretch reads GCKDIRGNIIPAGNTWISSDCTQSCACTDGVIQCQNFVCPSGSHCQYNEDGSSDCA. A VWFD 4 domain is found at 4863-5038; it reads ERCTIFGDPY…SWEVKAQHAF (176 aa). Cysteines 4865 and 5001 form a disulfide. Asn-5136 carries an N-linked (GlcNAc...) asparagine glycan. One can recognise a TIL 25 domain in the interval 5150 to 5203; the sequence is CPANTVYQRCMTPCPASCAKFVTPKVCEGPCVEGCASLPGYIYSDTQSLPVTHC. The VWFC 25 domain maps to 5204 to 5258; sequence GCTADGIYYKLGDSFVTNDCSQHCTCASQGILLCEPYGCRAGESCMVANFTRGCF. N-linked (GlcNAc...) asparagine glycosylation is present at Asn-5252. The 37-residue stretch at 5259-5295 folds into the EGF-like domain; that stretch reads QDSPCLQNPCHNDGRCEEQGATFICHCDFGYGGEFCT. Cystine bridges form between Cys-5263/Cys-5274, Cys-5268/Cys-5283, and Cys-5285/Cys-5294. The helical transmembrane segment at 5311–5337 threads the bilayer; it reads LVAILPGVLVMVLVPVLLPRVYVYMAT. At 5338 to 5376 the chain is on the cytoplasmic side; sequence RTTMGRRRMKRKEKKLLRQSRLRLEDADVPEPTFKATEF.

As to quaternary structure, probably forms covalent oligomers. As to expression, in testis, primarily in haploid spermatids.

It localises to the cell membrane. Functionally, binds in a species-specific manner to the zona pellucida of the egg. May be involved in gamete recognition and/or signaling. This chain is Zonadhesin (Zan), found in Mus musculus (Mouse).